The following is a 217-amino-acid chain: 3-isopropylmalate dehydratase small subunit (217 aa).

The protein belongs to the LeuD family. LeuD type 1 subfamily. As to quaternary structure, heterodimer of LeuC and LeuD.

It carries out the reaction (2R,3S)-3-isopropylmalate = (2S)-2-isopropylmalate. It functions in the pathway amino-acid biosynthesis; L-leucine biosynthesis; L-leucine from 3-methyl-2-oxobutanoate: step 2/4. Functionally, catalyzes the isomerization between 2-isopropylmalate and 3-isopropylmalate, via the formation of 2-isopropylmaleate. In Delftia acidovorans (strain DSM 14801 / SPH-1), this protein is 3-isopropylmalate dehydratase small subunit.